Here is a 204-residue protein sequence, read N- to C-terminus: Recombination protein RecR (204 aa).

A C4-type zinc finger spans residues C63 to C78. Positions N86–P181 constitute a Toprim domain.

This sequence belongs to the RecR family.

May play a role in DNA repair. It seems to be involved in an RecBC-independent recombinational process of DNA repair. It may act with RecF and RecO. The polypeptide is Recombination protein RecR (Dehalococcoides mccartyi (strain ATCC BAA-2100 / JCM 16839 / KCTC 5957 / BAV1)).